The following is a 317-amino-acid chain: Ribose-phosphate pyrophosphokinase A (317 aa).

Residues aspartate 130, histidine 132, and aspartate 145 each contribute to the Mg(2+) site. The binding of phosphoribosylpyrophosphate stretch occupies residues lysine 212 to glycine 227.

It belongs to the ribose-phosphate pyrophosphokinase family. The cofactor is Mg(2+).

It catalyses the reaction D-ribose 5-phosphate + ATP = 5-phospho-alpha-D-ribose 1-diphosphate + AMP + H(+). It functions in the pathway metabolic intermediate biosynthesis; 5-phospho-alpha-D-ribose 1-diphosphate biosynthesis; 5-phospho-alpha-D-ribose 1-diphosphate from D-ribose 5-phosphate (route I): step 1/1. The protein is Ribose-phosphate pyrophosphokinase A (prsA) of Dictyostelium discoideum (Social amoeba).